Consider the following 137-residue polypeptide: MKFYETMFILKPTLVEVEIKARLDFFKEVIIKNGGEIETCLDMGMRNLAYEIKKNKRGYYFVIYFKAQPSLILELERNYRINEEILRFIVIKYESKKEQSAWQSLVNKANNKPEPKPTKAKKEDVAPEAKEQAQTEA.

The tract at residues 104-137 (SLVNKANNKPEPKPTKAKKEDVAPEAKEQAQTEA) is disordered. Residues 111–137 (NKPEPKPTKAKKEDVAPEAKEQAQTEA) are compositionally biased toward basic and acidic residues.

Belongs to the bacterial ribosomal protein bS6 family.

Binds together with bS18 to 16S ribosomal RNA. The polypeptide is Small ribosomal subunit protein bS6 (Helicobacter hepaticus (strain ATCC 51449 / 3B1)).